Reading from the N-terminus, the 311-residue chain is MSWFQKLMPSRIRTDASERSRSVPEGLWTKCGHCSAVLYRPELERNQEVCPKCGDHMRIGARRRLAGFLDAEGQVEIGADVQPVDALRFRDSKKYRDRLAQAQKGTGERDALVAMQGRLRGMPVVAVAFEFSFMGGSMGSVVGERFVRAADTAREQRVPLVCFSASGGARMQEGLFSLMQMAKTSAALARLSEEGVPFVSVLTDPTMGGVSASLAMLGDLVVAEPGALIGFAGPRVIEQTVRETLPEGFQRAEFLLEHGAIDQIIDRREMADRLHRILAMLTHQPAAEAADAPEAGEQPSEATDPVGEHWD.

Residues 27–296 enclose the CoA carboxyltransferase N-terminal domain; that stretch reads LWTKCGHCSA…AEAADAPEAG (270 aa). The Zn(2+) site is built by Cys-31, Cys-34, Cys-50, and Cys-53. The C4-type zinc finger occupies 31–53; the sequence is CGHCSAVLYRPELERNQEVCPKC. Positions 286–299 are enriched in low complexity; the sequence is AAEAADAPEAGEQP. The segment at 286–311 is disordered; sequence AAEAADAPEAGEQPSEATDPVGEHWD.

This sequence belongs to the AccD/PCCB family. In terms of assembly, acetyl-CoA carboxylase is a heterohexamer composed of biotin carboxyl carrier protein (AccB), biotin carboxylase (AccC) and two subunits each of ACCase subunit alpha (AccA) and ACCase subunit beta (AccD). It depends on Zn(2+) as a cofactor.

Its subcellular location is the cytoplasm. The catalysed reaction is N(6)-carboxybiotinyl-L-lysyl-[protein] + acetyl-CoA = N(6)-biotinyl-L-lysyl-[protein] + malonyl-CoA. Its pathway is lipid metabolism; malonyl-CoA biosynthesis; malonyl-CoA from acetyl-CoA: step 1/1. Functionally, component of the acetyl coenzyme A carboxylase (ACC) complex. Biotin carboxylase (BC) catalyzes the carboxylation of biotin on its carrier protein (BCCP) and then the CO(2) group is transferred by the transcarboxylase to acetyl-CoA to form malonyl-CoA. The chain is Acetyl-coenzyme A carboxylase carboxyl transferase subunit beta from Alkalilimnicola ehrlichii (strain ATCC BAA-1101 / DSM 17681 / MLHE-1).